Consider the following 116-residue polypeptide: UPF0482 protein PC1_2049 (116 aa).

Residues 1–31 (MNHYSFSSLIRAFIPLSLVIVSAAWQPAALA) form the signal peptide.

It belongs to the UPF0482 family.

This chain is UPF0482 protein PC1_2049, found in Pectobacterium carotovorum subsp. carotovorum (strain PC1).